Here is a 115-residue protein sequence, read N- to C-terminus: Large ribosomal subunit protein P2 (115 aa).

Met1 carries the post-translational modification N-acetylmethionine. Phosphoserine is present on residues Ser17 and Ser19. Position 21 is an N6-acetyllysine; alternate (Lys21). At Lys21 the chain carries N6-succinyllysine; alternate. Residues 76-90 (APGSAAPAAGSAPAA) are compositionally biased toward low complexity. The segment at 76-115 (APGSAAPAAGSAPAAAEERKEEKKEESEESDDDMGFGLFD) is disordered. A phosphoserine mark is found at Ser79 and Ser86. Residues 91–101 (AEERKEEKKEE) show a composition bias toward basic and acidic residues. A phosphoserine mark is found at Ser102 and Ser105.

The protein belongs to the eukaryotic ribosomal protein P1/P2 family. In terms of assembly, heterodimer with RPLP1 at the lateral ribosomal stalk of the large ribosomal subunit.

Plays an important role in the elongation step of protein synthesis. In Equus caballus (Horse), this protein is Large ribosomal subunit protein P2 (RPLP2).